Reading from the N-terminus, the 479-residue chain is Fibrinogen beta chain (479 aa).

A signal peptide spans 1–18 (MRHLWLLLLSVSLVQTQA). Residues 20–82 (TTDSDKVDLS…VERKPPDAGG (63 aa)) form a disordered region. The beta-chain polymerization, binding distal domain of another fibrin stretch occupies residues 33 to 35 (GHR). Basic and acidic residues-rich tracts occupy residues 35–45 (RPVDRRKEEPP) and 64–78 (AKVDAGQKKVERKPP). Intrachain disulfides connect C219/C304 and C229/C258. The 257-residue stretch at 220-476 (NIPVVSGKEC…RMSMKIRPVF (257 aa)) folds into the Fibrinogen C-terminal domain. A glycan (N-linked (GlcNAc...) asparagine) is linked at N382. A disulfide bridge links C412 with C425.

In terms of assembly, heterohexamer; disulfide linked. Contains 2 sets of 3 non-identical chains (alpha, beta and gamma). The 2 heterotrimers are in head to head conformation with the N-termini in a small central domain. Conversion of fibrinogen to fibrin is triggered by thrombin, which cleaves fibrinopeptides A and B from alpha and beta chains, and thus exposes the N-terminal polymerization sites responsible for the formation of the soft clot.

The protein resides in the secreted. Cleaved by the protease thrombin to yield monomers which, together with fibrinogen alpha (FGA) and fibrinogen gamma (FGG), polymerize to form an insoluble fibrin matrix. Fibrin has a major function in hemostasis as one of the primary components of blood clots. In addition, functions during the early stages of wound repair to stabilize the lesion and guide cell migration during re-epithelialization. Was originally thought to be essential for platelet aggregation, based on in vitro studies using anticoagulated blood. However subsequent studies have shown that it is not absolutely required for thrombus formation in vivo. Enhances expression of SELP in activated platelets. Maternal fibrinogen is essential for successful pregnancy. Fibrin deposition is also associated with infection, where it protects against IFNG-mediated hemorrhage. May also facilitate the antibacterial immune response via both innate and T-cell mediated pathways. The protein is Fibrinogen beta chain (Fgb) of Rattus norvegicus (Rat).